Consider the following 99-residue polypeptide: Integration host factor subunit alpha (99 aa).

A disordered region spans residues 49 to 72; that stretch reads FGNFDLRDKNQRPGRNPKTGEDIP.

Belongs to the bacterial histone-like protein family. In terms of assembly, heterodimer of an alpha and a beta chain.

In terms of biological role, this protein is one of the two subunits of integration host factor, a specific DNA-binding protein that functions in genetic recombination as well as in transcriptional and translational control. The polypeptide is Integration host factor subunit alpha (Escherichia coli O9:H4 (strain HS)).